A 132-amino-acid chain; its full sequence is MKTIHVSVVTPDGPVYEDDVEMVSVKAKSGELGILPGHIRLVAPLEISAARLKKGGKTQYIAVSGGFLEVRPDKVTILAQAAERAEDIDVLRAKARKSGRTPLQSQQDDIDFKRAELALKRAMNRLSVAEMK.

Belongs to the ATPase epsilon chain family. F-type ATPases have 2 components, CF(1) - the catalytic core - and CF(0) - the membrane proton channel. CF(1) has five subunits: alpha(3), beta(3), gamma(1), delta(1), epsilon(1). CF(0) has three main subunits: a, b and c.

It localises to the cell membrane. Produces ATP from ADP in the presence of a proton gradient across the membrane. This is ATP synthase epsilon chain (atpC) from Bacillus caldotenax.